The chain runs to 212 residues: RNA chaperone ProQ (212 aa).

Basic and acidic residues-rich tracts occupy residues 102–124 and 132–144; these read ALKE…EKAK and RKAD…DKPK. The segment at 102–149 is disordered; sequence ALKESKERVFASRRTNTKEEKAKQPRRPAPRKADAAAKSDKPKAAPKA.

The protein belongs to the ProQ family.

It localises to the cytoplasm. In terms of biological role, RNA chaperone with significant RNA binding, RNA strand exchange and RNA duplexing activities. The protein is RNA chaperone ProQ of Aeromonas hydrophila subsp. hydrophila (strain ATCC 7966 / DSM 30187 / BCRC 13018 / CCUG 14551 / JCM 1027 / KCTC 2358 / NCIMB 9240 / NCTC 8049).